Here is a 260-residue protein sequence, read N- to C-terminus: Adenosylcobinamide-GDP ribazoletransferase (260 aa).

6 consecutive transmembrane segments (helical) span residues 40-60, 64-84, 117-137, 142-162, 188-208, and 209-229; these read AFPF…LLLL, ADPL…TGAL, YGAI…AVIA, PLTA…AIAW, QFAL…AFGL, and RPLV…TAFI.

Belongs to the CobS family. Mg(2+) is required as a cofactor.

It localises to the cell inner membrane. It carries out the reaction alpha-ribazole + adenosylcob(III)inamide-GDP = adenosylcob(III)alamin + GMP + H(+). It catalyses the reaction alpha-ribazole 5'-phosphate + adenosylcob(III)inamide-GDP = adenosylcob(III)alamin 5'-phosphate + GMP + H(+). Its pathway is cofactor biosynthesis; adenosylcobalamin biosynthesis; adenosylcobalamin from cob(II)yrinate a,c-diamide: step 7/7. Joins adenosylcobinamide-GDP and alpha-ribazole to generate adenosylcobalamin (Ado-cobalamin). Also synthesizes adenosylcobalamin 5'-phosphate from adenosylcobinamide-GDP and alpha-ribazole 5'-phosphate. This Rhizobium johnstonii (strain DSM 114642 / LMG 32736 / 3841) (Rhizobium leguminosarum bv. viciae) protein is Adenosylcobinamide-GDP ribazoletransferase.